Here is a 261-residue protein sequence, read N- to C-terminus: Triosephosphate isomerase (261 aa).

Residue 10-12 (NWK) coordinates substrate. The Electrophile role is filled by His100. Glu172 acts as the Proton acceptor in catalysis. Residues Gly178, Ser218, and 239–240 (GG) contribute to the substrate site.

Belongs to the triosephosphate isomerase family. Homodimer.

The protein localises to the cytoplasm. The enzyme catalyses D-glyceraldehyde 3-phosphate = dihydroxyacetone phosphate. The protein operates within carbohydrate biosynthesis; gluconeogenesis. It participates in carbohydrate degradation; glycolysis; D-glyceraldehyde 3-phosphate from glycerone phosphate: step 1/1. Functionally, involved in the gluconeogenesis. Catalyzes stereospecifically the conversion of dihydroxyacetone phosphate (DHAP) to D-glyceraldehyde-3-phosphate (G3P). The protein is Triosephosphate isomerase of Mycobacterium avium (strain 104).